A 590-amino-acid chain; its full sequence is Aspartate--tRNA(Asp/Asn) ligase (590 aa).

Glu170 is a binding site for L-aspartate. An aspartate region spans residues 194–197 (QLFK). Arg216 contacts L-aspartate. ATP is bound by residues 216 to 218 (RDE) and Gln225. His448 serves as a coordination point for L-aspartate. Glu482 is a binding site for ATP. Arg489 contacts L-aspartate. 534–537 (GWDR) lines the ATP pocket. The interval 557–590 (SGGGADPLTGAPAPITPQQRRESGIDAKPKKDGE) is disordered. Basic and acidic residues predominate over residues 575–590 (QRRESGIDAKPKKDGE).

It belongs to the class-II aminoacyl-tRNA synthetase family. Type 1 subfamily. Homodimer.

Its subcellular location is the cytoplasm. It catalyses the reaction tRNA(Asx) + L-aspartate + ATP = L-aspartyl-tRNA(Asx) + AMP + diphosphate. Functionally, aspartyl-tRNA synthetase with relaxed tRNA specificity since it is able to aspartylate not only its cognate tRNA(Asp) but also tRNA(Asn). Reaction proceeds in two steps: L-aspartate is first activated by ATP to form Asp-AMP and then transferred to the acceptor end of tRNA(Asp/Asn). This is Aspartate--tRNA(Asp/Asn) ligase from Mycobacterium sp. (strain JLS).